The primary structure comprises 241 residues: Pyridoxal phosphate phosphatase PHOSPHO2 (241 aa).

Asp-8 serves as the catalytic Nucleophile. The Mg(2+) site is built by Asp-8 and Asp-10. Asp-10 acts as the Proton donor in catalysis. Residues Asp-19 and Asp-99 each contribute to the substrate site. Asp-179 is a binding site for Mg(2+).

This sequence belongs to the HAD-like hydrolase superfamily. PHOSPHO family. Requires Mg(2+) as cofactor.

It catalyses the reaction pyridoxal 5'-phosphate + H2O = pyridoxal + phosphate. In terms of biological role, phosphatase that has high activity toward pyridoxal 5'-phosphate (PLP). Also active at much lower level toward pyrophosphate, phosphoethanolamine (PEA), phosphocholine (PCho), phospho-l-tyrosine, fructose-6-phosphate, p-nitrophenyl phosphate, and h-glycerophosphate. This is Pyridoxal phosphate phosphatase PHOSPHO2 (Phospho2) from Mus musculus (Mouse).